The chain runs to 1047 residues: FACT complex subunit SPT16 (1047 aa).

An N-acetylalanine modification is found at alanine 2. Lysine 139 carries the post-translational modification N6-acetyllysine. Position 188 is a phosphoserine (serine 188). Residues lysine 196 and lysine 223 each carry the N6-acetyllysine modification. Phosphoserine is present on serine 455. The stretch at 465-507 (RNEMTAEEKRRAHQKELAAQLNEEAKRRLTEQKGEQQIQKARK) forms a coiled coil. Residues 491–518 (RRLTEQKGEQQIQKARKSNVSYKNPSLM) are disordered. A Glycyl lysine isopeptide (Lys-Gly) (interchain with G-Cter in SUMO2) cross-link involves residue lysine 497. The span at 499–514 (EQQIQKARKSNVSYKN) shows a compositional bias: polar residues. The residue at position 508 (serine 508) is a Phosphoserine. An N6-acetyllysine; alternate modification is found at lysine 513. Residue lysine 513 forms a Glycyl lysine isopeptide (Lys-Gly) (interchain with G-Cter in SUMO2); alternate linkage. A Glycyl lysine isopeptide (Lys-Gly) (interchain with G-Cter in SUMO2) cross-link involves residue lysine 647. Residues serine 650 and serine 658 each carry the phosphoserine modification. N6-acetyllysine is present on residues lysine 732 and lysine 786. Phosphothreonine is present on threonine 903. Lysine 904 carries the N6-acetyllysine modification. The segment at 918–1047 (EQGGWSFLEP…SSAPPKKKRK (130 aa)) is disordered. Residues 927-973 (PEGEGSDAEDGDSESEIEDETFNPSEDDYEEEEEDSDEDYSSEAEES) show a composition bias toward acidic residues. 4 positions are modified to phosphoserine: serine 979, serine 982, serine 986, and serine 1015. Positions 985-1005 (ESGKDWDELEEEARKADRESR) are enriched in basic and acidic residues. Positions 1024-1039 (VHSSGRGSNRGSRHSS) are enriched in low complexity.

It belongs to the peptidase M24 family. SPT16 subfamily. As to quaternary structure, interacts with MYOG (via C-terminal region). Component of the FACT complex, a stable heterodimer of SSRP1 and SUPT16H. Also a component of a CK2-SPT16-SSRP1 complex which forms following UV irradiation, composed of SSRP1, SUPT16H, CSNK2A1, CSNK2A2 and CSNK2B. Interacts with NEK9. Binds to histone H2A-H2B. Identified in a centromere complex containing histones H2A, H2B and H4, and at least CENPA, CENPB, CENPC, CENPT, CENPN, HJURP, SUPT16H, SSRP1 and RSF1. Interacts with GTF2E2. ADP-ribosylated. ADP-ribosylation by PARP1 is induced by genotoxic stress and correlates with dissociation of FACT from chromatin. As to expression, widely expressed. Expressed in brain, liver, heart, kidneys, lungs, spleen, thymus, ovary, and testes, with highest levels of expression observed in thymus.

It is found in the nucleus. The protein localises to the chromosome. Component of the FACT complex, a general chromatin factor that acts to reorganize nucleosomes. The FACT complex is involved in multiple processes that require DNA as a template such as mRNA elongation, DNA replication and DNA repair. During transcription elongation the FACT complex acts as a histone chaperone that both destabilizes and restores nucleosomal structure. It facilitates the passage of RNA polymerase II and transcription by promoting the dissociation of one histone H2A-H2B dimer from the nucleosome, then subsequently promotes the reestablishment of the nucleosome following the passage of RNA polymerase II. The FACT complex is probably also involved in phosphorylation of 'Ser-392' of p53/TP53 via its association with CK2 (casein kinase II). The protein is FACT complex subunit SPT16 (Supt16h) of Mus musculus (Mouse).